Consider the following 234-residue polypeptide: Phosphatidylinositol phosphate synthase (234 aa).

The next 2 membrane-spanning stretches (helical) occupy residues 28 to 48 (LTPDAVTIIGTTASVAGALVL) and 54 to 70 (LFPGACVVWFFVLFDML). 31 to 34 (DAVT) contributes to the a CDP-1,2-diacyl-sn-glycerol binding site. Asp68 and Asp71 together coordinate Mg(2+). Gly72, Arg76, and Thr82 together coordinate a CDP-1,2-diacyl-sn-glycerol. Mg(2+) contacts are provided by Asp89 and Asp93. 4 helical membrane passes run 91–110 (ACDRISDGAVFGGLLWWVAF), 116–134 (LLVVATLICLVTSQVISYI), 155–173 (RLIIVLAGAGVSDFPFIAW), and 179–197 (VAMWLLAVTSVITCGQRLY). Asp93 (proton acceptor) is an active-site residue. Positions 211 to 234 (PSAPVRDDDAQGHPRSGDPGKTQR) are disordered. The span at 215-228 (VRDDDAQGHPRSGD) shows a compositional bias: basic and acidic residues.

The protein belongs to the CDP-alcohol phosphatidyltransferase class-I family. Homodimer. Mg(2+) serves as cofactor.

It is found in the cell membrane. It catalyses the reaction a CDP-1,2-diacyl-sn-glycerol + 1D-myo-inositol 3-phosphate = a 1,2-diacyl-sn-glycero-3-phospho-(1D-myo-inositol-3-phosphate) + CMP + H(+). The enzyme catalyses 1,2-di-(9Z-octadecenoyl)-sn-glycero-3-cytidine-5'-diphosphate + 1D-myo-inositol 3-phosphate = 1,2-di-(9Z-octadecenoyl)-sn-glycero-3-phospho-(1D-myo-inositol-3-phosphate) + CMP + H(+). It participates in phospholipid metabolism; phosphatidylinositol phosphate biosynthesis. In terms of biological role, catalyzes the conjugation of the 1'-hydroxyl group of D-myo-inositol-3-phosphate (also named L-myo-inositol-1-phosphate) with a lipid tail of cytidine diphosphate diacylglycerol (CDP-DAG), forming phosphatidylinositol phosphate (PIP) and CMP. PIP is a precursor of phosphatidylinositol (PI) which is an essential lipid for mycobacteria required for formation of their cell wall. The polypeptide is Phosphatidylinositol phosphate synthase (Mycobacterium marinum (strain ATCC BAA-535 / M)).